Consider the following 589-residue polypeptide: MLLGLLVLSLAFQGTLAVTECEECKSIVDLLQFEWGEKKTEECVMEIAVFICETFHIEDNDVCNFIISDFSDEFMYVIKQILVTPHQLCGLLMKNDCGDFVDPLATIWNMTIPGNQPPFVPKQVVPPGNPTLRALHLTDLHVDMFYTVGLEADCGTPQCCRPQDMNVEIVENGDVKQPAGPWGSVGSCDTPYWLLTNMLQNIASTAGKLDYIMVSGDLVSHTVWAYTPETHSFMVKNLSDTIRSYFPKTPVYFAVGNHEGVPVDNIAPHFTPKKYHMDWLYKAMSNAWQGWIPADQEKSLEYNGCYMKKIYDGLRMISLNNVYGDRINFWLYINQTDPDGTLQWLINQLQDAENVGDKVHIVAHIPGSDGEALEGYALNYYKIINRYANTVVGQFFGHTHSEKFYMMYANPDDYKSTPTNVVYSAPSVTPYSDYFPAYRIYTIDGVHKGSTYQVIDYEEWFFNLTSNNANPTNVKWEVLYQSANMEYGLKGQIPTEYNQMIERMKTDDSLFNKYYENHNRRSIYDGRAPCNDQQCRNGYLCDARQFHQTQQLCTDLEGGIQKPEPKKNKYSARFATSNERRRGKEECKI.

The first 17 residues, 1–17 (MLLGLLVLSLAFQGTLA), serve as a signal peptide directing secretion. A Saposin B-type domain is found at 18–101 (VTECEECKSI…LMKNDCGDFV (84 aa)). 3 disulfide bridges follow: cysteine 21-cysteine 97, cysteine 24-cysteine 89, and cysteine 52-cysteine 63. An N-linked (GlcNAc...) asparagine glycan is attached at asparagine 109. 2 residues coordinate Zn(2+): aspartate 139 and histidine 141. 2 cysteine pairs are disulfide-bonded: cysteine 154–cysteine 159 and cysteine 160–cysteine 188. Aspartate 217 is a binding site for Zn(2+). Residue asparagine 237 is glycosylated (N-linked (GlcNAc...) asparagine). Zn(2+) is bound at residue asparagine 257. Asparagine 334 carries N-linked (GlcNAc...) asparagine glycosylation. Positions 364, 398, and 400 each coordinate Zn(2+). Asparagine 463 is a glycosylation site (N-linked (GlcNAc...) asparagine). 2 disulfide bridges follow: cysteine 530-cysteine 535 and cysteine 541-cysteine 553. Residues 562–589 (KPEPKKNKYSARFATSNERRRGKEECKI) form a disordered region. Residues 578–589 (NERRRGKEECKI) show a composition bias toward basic and acidic residues.

Belongs to the acid sphingomyelinase family. The cofactor is Zn(2+).

It is found in the secreted. It catalyses the reaction an N-(acyl)-sphingosylphosphocholine + H2O = an N-acyl-sphingoid base + phosphocholine + H(+). The enzyme catalyses a sphingomyelin + H2O = phosphocholine + an N-acylsphing-4-enine + H(+). The catalysed reaction is an N-acyl-15-methylhexadecasphing-4-enine-1-phosphocholine + H2O = an N-acyl-15-methylhexadecasphing-4-enine + phosphocholine + H(+). It participates in lipid metabolism; sphingolipid metabolism. Functionally, converts sphingomyelin to ceramide (N-acyl-sphingoid base) and phosphocholine. C.elegans contain specific sphingoid bases, which are unique or different in structure compared to the sphingoid bases found in other animals. Two examples of these distinctive compounds are: 15-methylhexadecasphinganine and 15-methylhexadecasphing-4-enine. This Caenorhabditis elegans protein is Putative sphingomyelin phosphodiesterase asm-3 (asm-3).